The sequence spans 90 residues: Probable acyl carrier protein (90 aa).

The Carrier domain occupies 9 to 90 (QVTVEELSAL…LVNGALKTGV (82 aa)). Ser-47 carries the post-translational modification O-(pantetheine 4'-phosphoryl)serine.

In terms of processing, 4'-phosphopantetheine is transferred from CoA to a specific serine of the apo-ACP-like protein.

Involved in developmentally regulated synthesis of a compound biosynthetically related to polyketide antibiotics which is essential for spore color in Streptomyces coelicolor. The protein is Probable acyl carrier protein of Streptomyces coelicolor (strain ATCC BAA-471 / A3(2) / M145).